A 239-amino-acid polypeptide reads, in one-letter code: 2',3'-cyclic-nucleotide 3'-phosphodiesterase (239 aa).

Catalysis depends on proton donor/acceptor residues H39 and H150.

It belongs to the 2H phosphoesterase superfamily. CPD1 family.

The protein resides in the golgi apparatus. It carries out the reaction ADP-alpha-D-ribose 1'',2''-cyclic phosphate + H2O = ADP-alpha-D-ribose 1''-phosphate + H(+). The enzyme catalyses 2',3'-cyclophospho-AMP + H2O = adenosine 2'-phosphate + H(+). The catalysed reaction is 2',3'-cyclophospho-GMP + H2O = guanosine 2'-phosphate + H(+). It catalyses the reaction 2',3'-cyclophospho-UMP + H2O = uridine 2'-phosphate + H(+). It carries out the reaction 2',3'-cyclophospho-CMP + H2O = cytidine 2'-phosphate + H(+). The enzyme catalyses a nucleoside 2',3'-cyclic phosphate + H2O = a nucleoside 2'-phosphate + H(+). Its function is as follows. Involved in the metabolism of ADP-ribose 1',2'-cyclic phosphate which is produced as a consequence of tRNA splicing. The polypeptide is 2',3'-cyclic-nucleotide 3'-phosphodiesterase (Saccharomyces cerevisiae (strain ATCC 204508 / S288c) (Baker's yeast)).